Here is a 332-residue protein sequence, read N- to C-terminus: MNPLIFKGNRPFDLIAVGRLCVDLNANETQRPMEETRTFTKYVGGSPANIAIGAARLGLQTGFIGKVSDDQMGRFITGYLKDNKINTDQIPIDCTGAVTGLAFTEIKSPEDCSILMYRDNVADLNLDPTEVSEDYIKQSKALLISGTALAKSPSREAVFLALEYARKHDVVVFFDVDYRPYTWQSEAETAVYYNLAAEKSDVIIGTREEFDMMEKLLNYEKSNDQVTAERWFSHHAKIVVIKHGGDGSIAYTRDGQSHRGGIFKTKVLKTFGAGDSYASAFIYGLMQGLEIPQAMRLGGASASIVISKHSCSDAMPTRAEISAFMETAEELV.

The protein belongs to the carbohydrate kinase PfkB family.

It catalyses the reaction 5-dehydro-2-deoxy-D-gluconate + ATP = 6-phospho-5-dehydro-2-deoxy-D-gluconate + ADP + H(+). The protein operates within polyol metabolism; myo-inositol degradation into acetyl-CoA; acetyl-CoA from myo-inositol: step 5/7. Functionally, catalyzes the phosphorylation of 5-dehydro-2-deoxy-D-gluconate (2-deoxy-5-keto-D-gluconate or DKG) to 6-phospho-5-dehydro-2-deoxy-D-gluconate (DKGP). This chain is 5-dehydro-2-deoxygluconokinase, found in Bacillus thuringiensis subsp. konkukian (strain 97-27).